The following is a 137-amino-acid chain: Large ribosomal subunit protein uL16 (137 aa).

Residues 1–17 (MLQPKRTKFRKQMKGRN) show a composition bias toward basic residues. Positions 1–22 (MLQPKRTKFRKQMKGRNRGLAQ) are disordered.

It belongs to the universal ribosomal protein uL16 family. In terms of assembly, part of the 50S ribosomal subunit.

In terms of biological role, binds 23S rRNA and is also seen to make contacts with the A and possibly P site tRNAs. The chain is Large ribosomal subunit protein uL16 from Teredinibacter turnerae (strain ATCC 39867 / T7901).